We begin with the raw amino-acid sequence, 302 residues long: F-box protein At1g20360 (302 aa).

Residues 1-48 (MNSLPLHLLDQILFRLEPKSLAMMKSTNRTINSHISDPLFESEYFSRL) form the F-box domain.

In Arabidopsis thaliana (Mouse-ear cress), this protein is F-box protein At1g20360.